The sequence spans 352 residues: Ion-translocating oxidoreductase complex subunit D (352 aa).

The next 5 membrane-spanning stretches (helical) occupy residues 20–40 (IMLL…WFFG), 42–62 (GTLV…ALVL), 78–109 (ALLT…VIIA), 123–143 (PAMI…TSWL), and 148–168 (IAVN…GHTA). T187 bears the FMN phosphoryl threonine mark. The next 5 membrane-spanning stretches (helical) occupy residues 214-234 (ILAG…GVWL), 242-262 (WHIP…GWLF), 267-287 (LAAP…FFIL), 301-321 (LIFG…GGYP), and 322-342 (DGVA…DYYT).

It belongs to the NqrB/RnfD family. The complex is composed of six subunits: RsxA, RsxB, RsxC, RsxD, RsxE and RsxG. Requires FMN as cofactor.

It is found in the cell inner membrane. Functionally, part of a membrane-bound complex that couples electron transfer with translocation of ions across the membrane. Required to maintain the reduced state of SoxR. In Escherichia coli O157:H7, this protein is Ion-translocating oxidoreductase complex subunit D.